Here is a 254-residue protein sequence, read N- to C-terminus: Small ribosomal subunit protein uS2 (254 aa).

Over residues 228–248 the composition is skewed to basic and acidic residues; that stretch reads RKERKGQDAEEELKKASEPKA. The segment at 228 to 254 is disordered; sequence RKERKGQDAEEELKKASEPKAAEAAAE.

It belongs to the universal ribosomal protein uS2 family.

The sequence is that of Small ribosomal subunit protein uS2 from Nitratidesulfovibrio vulgaris (strain ATCC 29579 / DSM 644 / CCUG 34227 / NCIMB 8303 / VKM B-1760 / Hildenborough) (Desulfovibrio vulgaris).